A 350-amino-acid chain; its full sequence is Solute carrier family 35 member E4 (350 aa).

A run of 8 helical transmembrane segments spans residues 40-60 (VLGQ…LLAG), 79-99 (PLLL…WGAQ), 110-130 (VLLL…GLST), 135-155 (LAQL…ALLL), 218-238 (VTLL…AALV), 258-278 (VLLS…LLAL), 279-299 (TSAL…LILS), and 301-321 (LLFG…TLSG). The EamA domain occupies 125 to 179 (NVGLSTVPLDLAQLATTTTPLFTLALSALLLGRRHHPLQFAAMGPLCLGAACSLA).

It belongs to the TPT transporter family. SLC35E subfamily.

It localises to the membrane. Its function is as follows. Putative transporter. This Rattus norvegicus (Rat) protein is Solute carrier family 35 member E4 (Slc35e4).